The following is a 104-amino-acid chain: METIAFRMRLHPGKRDEYRRRHDAIWPELADALRAAGISDYWIFLDEDTHHLFAVLKRPIGHRIAQLAETDVMRRWWAYMADLMATGPDGRPVEKSLEPMFHLE.

Tyrosine 18 is a binding site for substrate. Histidine 22 (proton donor) is an active-site residue. Substrate contacts are provided by residues tyrosine 41 and 76–77 (WW).

The protein belongs to the rhamnose mutarotase family. Homodimer.

The protein resides in the cytoplasm. It catalyses the reaction alpha-L-rhamnose = beta-L-rhamnose. It participates in carbohydrate metabolism; L-rhamnose metabolism. Its function is as follows. Involved in the anomeric conversion of L-rhamnose. The sequence is that of L-rhamnose mutarotase from Burkholderia ambifaria (strain ATCC BAA-244 / DSM 16087 / CCUG 44356 / LMG 19182 / AMMD) (Burkholderia cepacia (strain AMMD)).